Reading from the N-terminus, the 358-residue chain is Aromatic amino acid aminotransferase (358 aa).

K222 carries the N6-(pyridoxal phosphate)lysine modification.

The protein belongs to the class-II pyridoxal-phosphate-dependent aminotransferase family. In terms of assembly, homodimer. Pyridoxal 5'-phosphate serves as cofactor.

It carries out the reaction an aromatic L-alpha-amino acid + 2-oxoglutarate = an aromatic oxo-acid + L-glutamate. Its function is as follows. Aminotransferase that catalyzes the conversion of aromatic amino acids and 2-oxoglutarate into corresponding aromatic oxo acids and L-glutamate. The chain is Aromatic amino acid aminotransferase from Mycobacterium sp. (strain JLS).